The primary structure comprises 538 residues: Chaperonin GroEL (538 aa).

ATP contacts are provided by residues 29-32, 86-90, G413, 476-478, and D492; these read TIGP, DGTTT, and NAA.

This sequence belongs to the chaperonin (HSP60) family. Forms a cylinder of 14 subunits composed of two heptameric rings stacked back-to-back. Interacts with the co-chaperonin GroES.

The protein localises to the cytoplasm. The catalysed reaction is ATP + H2O + a folded polypeptide = ADP + phosphate + an unfolded polypeptide.. Functionally, together with its co-chaperonin GroES, plays an essential role in assisting protein folding. The GroEL-GroES system forms a nano-cage that allows encapsulation of the non-native substrate proteins and provides a physical environment optimized to promote and accelerate protein folding. In Staphylococcus aureus (strain bovine RF122 / ET3-1), this protein is Chaperonin GroEL.